Reading from the N-terminus, the 96-residue chain is (4S)-4-hydroxy-5-phosphonooxypentane-2,3-dione isomerase (96 aa).

One can recognise an ABM domain in the interval 2–91 (HVTLVEINVK…MTGPRKKTVF (90 aa)).

The protein belongs to the LsrG family. As to quaternary structure, homodimer.

It localises to the cytoplasm. It carries out the reaction (2S)-2-hydroxy-3,4-dioxopentyl phosphate = 3-hydroxy-2,4-dioxopentyl phosphate. In terms of biological role, involved in the degradation of phospho-AI-2, thereby terminating induction of the lsr operon and closing the AI-2 signaling cycle. Catalyzes the conversion of (4S)-4-hydroxy-5-phosphonooxypentane-2,3-dione (P-DPD) to 3-hydroxy-5-phosphonooxypentane-2,4-dione (P-HPD). This is (4S)-4-hydroxy-5-phosphonooxypentane-2,3-dione isomerase from Yersinia pseudotuberculosis serotype O:1b (strain IP 31758).